Consider the following 267-residue polypeptide: Fibroin light chain (267 aa).

Positions 1–16 are cleaved as a signal peptide; that stretch reads MLPFVLVLLVATSALA. S19 carries the N-acetylserine; in short form modification. C103 and C162 form a disulfide bridge.

In terms of assembly, silk fibroin elementary unit consists in a disulfide-linked heavy and light chain and a p25 glycoprotein in molar ratios of 6:6:1. This results in a complex of approximately 2.3 MDa. Post-translationally, partially N-terminally processed to yield a short form which lacks the first two residues of the long form. In terms of processing, the interchain disulfide bridge is essential for the intracellular transport and secretion of fibroin. Produced exclusively in the posterior (PSG) section of silk glands, which are essentially modified salivary glands.

Its subcellular location is the secreted. It is likely that the major role of L-chain is to prevent the retention of H-chain in ER by forming the disulfide linkage. The protein is Fibroin light chain (FIBL) of Galleria mellonella (Greater wax moth).